A 421-amino-acid polypeptide reads, in one-letter code: Histidine--tRNA ligase (421 aa).

It belongs to the class-II aminoacyl-tRNA synthetase family.

Its subcellular location is the cytoplasm. The catalysed reaction is tRNA(His) + L-histidine + ATP = L-histidyl-tRNA(His) + AMP + diphosphate + H(+). The chain is Histidine--tRNA ligase from Pyrobaculum islandicum (strain DSM 4184 / JCM 9189 / GEO3).